Consider the following 214-residue polypeptide: ATP-dependent Clp protease proteolytic subunit (214 aa).

The active-site Nucleophile is the serine 113. The active site involves histidine 138.

Belongs to the peptidase S14 family. Fourteen ClpP subunits assemble into 2 heptameric rings which stack back to back to give a disk-like structure with a central cavity, resembling the structure of eukaryotic proteasomes.

The protein resides in the cytoplasm. It carries out the reaction Hydrolysis of proteins to small peptides in the presence of ATP and magnesium. alpha-casein is the usual test substrate. In the absence of ATP, only oligopeptides shorter than five residues are hydrolyzed (such as succinyl-Leu-Tyr-|-NHMec, and Leu-Tyr-Leu-|-Tyr-Trp, in which cleavage of the -Tyr-|-Leu- and -Tyr-|-Trp bonds also occurs).. Functionally, cleaves peptides in various proteins in a process that requires ATP hydrolysis. Has a chymotrypsin-like activity. Plays a major role in the degradation of misfolded proteins. In Teredinibacter turnerae (strain ATCC 39867 / T7901), this protein is ATP-dependent Clp protease proteolytic subunit.